Consider the following 246-residue polypeptide: Nuclear transcription factor Y subunit C-2 (246 aa).

Disordered regions lie at residues 1–35 (MDNQQLPYAGQPAAAGAGAPVPGVPGAGGPPAVPH) and 205–246 (QQGA…PSSE). Over residues 9–21 (AGQPAAAGAGAPV) the composition is skewed to low complexity.

The protein belongs to the NFYC/HAP5 subunit family. As to quaternary structure, heterotrimeric transcription factor composed of three components, NF-YA, NF-YB and NF-YC. NF-YB and NF-YC must interact and dimerize for NF-YA association and DNA binding. Interacts with NFYB8, NFYB10 and HD5/NFYB11.

It localises to the nucleus. It is found in the cytoplasm. Functionally, probable transcription factor involved in the regulation of flowering time under long day (LD) conditions. Functions as a repressor of flowering, independently of HD1 and GHD7. Controls flowering time by negatively regulating the expression of EHD1 and HD3A. Component of the NF-Y/HAP transcription factor complex. The sequence is that of Nuclear transcription factor Y subunit C-2 from Oryza sativa subsp. japonica (Rice).